Reading from the N-terminus, the 210-residue chain is NAD(P)H-hydrate epimerase (210 aa).

Positions 11–210 (AHNFDDYTIN…TVADIGIYEP (200 aa)) constitute a YjeF N-terminal domain. 60-64 (NNGGD) serves as a coordination point for (6S)-NADPHX. The K(+) site is built by asparagine 61 and aspartate 123. (6S)-NADPHX is bound by residues 127–133 (GVGLSRD) and aspartate 156. Residue threonine 159 coordinates K(+).

It belongs to the NnrE/AIBP family. Requires K(+) as cofactor.

It catalyses the reaction (6R)-NADHX = (6S)-NADHX. The catalysed reaction is (6R)-NADPHX = (6S)-NADPHX. Catalyzes the epimerization of the S- and R-forms of NAD(P)HX, a damaged form of NAD(P)H that is a result of enzymatic or heat-dependent hydration. This is a prerequisite for the S-specific NAD(P)H-hydrate dehydratase to allow the repair of both epimers of NAD(P)HX. This Oenococcus oeni (strain ATCC BAA-331 / PSU-1) protein is NAD(P)H-hydrate epimerase.